The chain runs to 180 residues: Protein GrpE (180 aa).

The segment at 1-25 (MSKKKAEDKQPIIKDEAVEEPKSDS) is disordered.

Belongs to the GrpE family. In terms of assembly, homodimer.

The protein localises to the cytoplasm. Participates actively in the response to hyperosmotic and heat shock by preventing the aggregation of stress-denatured proteins, in association with DnaK and GrpE. It is the nucleotide exchange factor for DnaK and may function as a thermosensor. Unfolded proteins bind initially to DnaJ; upon interaction with the DnaJ-bound protein, DnaK hydrolyzes its bound ATP, resulting in the formation of a stable complex. GrpE releases ADP from DnaK; ATP binding to DnaK triggers the release of the substrate protein, thus completing the reaction cycle. Several rounds of ATP-dependent interactions between DnaJ, DnaK and GrpE are required for fully efficient folding. The chain is Protein GrpE from Fructilactobacillus sanfranciscensis (Lactobacillus sanfranciscensis).